Consider the following 446-residue polypeptide: N-succinylarginine dihydrolase (446 aa).

Substrate is bound by residues Ala19–Ser28, Asn110, and His137–Arg138. Glu174 is an active-site residue. Arg213 is a binding site for substrate. His249 is a catalytic residue. Substrate-binding residues include Asp251 and Asn364. Catalysis depends on Cys370, which acts as the Nucleophile.

Belongs to the succinylarginine dihydrolase family. As to quaternary structure, homodimer.

It carries out the reaction N(2)-succinyl-L-arginine + 2 H2O + 2 H(+) = N(2)-succinyl-L-ornithine + 2 NH4(+) + CO2. The protein operates within amino-acid degradation; L-arginine degradation via AST pathway; L-glutamate and succinate from L-arginine: step 2/5. Functionally, catalyzes the hydrolysis of N(2)-succinylarginine into N(2)-succinylornithine, ammonia and CO(2). The chain is N-succinylarginine dihydrolase from Burkholderia mallei (strain NCTC 10247).